The chain runs to 391 residues: E3 ubiquitin-protein ligase RMND5A (391 aa).

Methionine 1 carries the N-acetylmethionine modification. Residues 114-146 (SQRLLNEVMVEHFFRQGMLDVAEELCQESGLSV) enclose the LisH domain. The region spanning 153-210 (PFVELNRILEALKVRVLRPALEWAVSNREMLIAQNSSLEFKLHRLYFISLLMGGTTNQ) is the CTLH domain. The RING-Gid-type zinc finger occupies 336 to 377 (CPILRQQTTDNNPPMKLVCGHIISRDALNKMFNGSKLKCPYC).

Identified in the CTLH complex that contains GID4, RANBP9 and/or RANBP10, MKLN1, MAEA, RMND5A (or alternatively its paralog RMND5B), GID8, ARMC8, WDR26 and YPEL5. Within this complex, MAEA, RMND5A (or alternatively its paralog RMND5B), GID8, WDR26, and RANBP9 and/or RANBP10 form the catalytic core, while GID4, MKLN1, ARMC8 and YPEL5 have ancillary roles.

It localises to the nucleus. The protein localises to the nucleoplasm. Its subcellular location is the cytoplasm. It catalyses the reaction S-ubiquitinyl-[E2 ubiquitin-conjugating enzyme]-L-cysteine + [acceptor protein]-L-lysine = [E2 ubiquitin-conjugating enzyme]-L-cysteine + N(6)-ubiquitinyl-[acceptor protein]-L-lysine.. In terms of biological role, core component of the CTLH E3 ubiquitin-protein ligase complex that selectively accepts ubiquitin from UBE2H and mediates ubiquitination and subsequent proteasomal degradation of the transcription factor HBP1. MAEA and RMND5A are both required for catalytic activity of the CTLH E3 ubiquitin-protein ligase complex. Catalytic activity of the complex is required for normal cell proliferation. The CTLH E3 ubiquitin-protein ligase complex is not required for the degradation of enzymes involved in gluconeogenesis, such as FBP1. The chain is E3 ubiquitin-protein ligase RMND5A (Rmnd5a) from Mus musculus (Mouse).